The chain runs to 414 residues: Putative L-lactate dehydrogenase (414 aa).

One can recognise an FMN hydroxy acid dehydrogenase domain in the interval 29–406; sequence RRLGAALTIQ…SPRHVTQLRR (378 aa). Tyr-55 is an a 2-oxocarboxylate binding site. 2 residues coordinate FMN: Ser-137 and Gln-159. Tyr-161 serves as a coordination point for a 2-oxocarboxylate. Thr-187 serves as a coordination point for FMN. Arg-196 is a binding site for a 2-oxocarboxylate. Lys-277 provides a ligand contact to FMN. The Proton acceptor role is filled by His-301. A 2-oxocarboxylate is bound at residue Arg-304. FMN is bound by residues 332 to 336 and 355 to 356; these read DTGIM and GR.

This sequence belongs to the FMN-dependent alpha-hydroxy acid dehydrogenase family. FMN is required as a cofactor.

It carries out the reaction (S)-lactate + A = pyruvate + AH2. The chain is Putative L-lactate dehydrogenase (lldD) from Mycobacterium tuberculosis (strain ATCC 25618 / H37Rv).